Consider the following 213-residue polypeptide: Uridine kinase (213 aa).

An ATP-binding site is contributed by glycine 13–serine 20.

Belongs to the uridine kinase family.

The protein localises to the cytoplasm. It carries out the reaction uridine + ATP = UMP + ADP + H(+). The enzyme catalyses cytidine + ATP = CMP + ADP + H(+). The protein operates within pyrimidine metabolism; CTP biosynthesis via salvage pathway; CTP from cytidine: step 1/3. It participates in pyrimidine metabolism; UMP biosynthesis via salvage pathway; UMP from uridine: step 1/1. The chain is Uridine kinase from Histophilus somni (strain 129Pt) (Haemophilus somnus).